The chain runs to 52 residues: Light-harvesting protein B-880 alpha chain (52 aa).

The Cytoplasmic portion of the chain corresponds to methionine 1–arginine 12. The chain crosses the membrane as a helical span at residues threonine 13–leucine 33. Residue histidine 29 participates in a bacteriochlorophyll binding. Residues serine 34 to serine 52 lie on the Periplasmic side of the membrane.

Belongs to the antenna complex alpha subunit family. The core complex is formed by different alpha and beta chains, binding bacteriochlorophyll molecules, and arranged most probably in tetrameric structures disposed around the reaction center. The non-pigmented gamma chains may constitute additional components.

Its subcellular location is the cell inner membrane. In terms of biological role, antenna complexes are light-harvesting systems, which transfer the excitation energy to the reaction centers. The chain is Light-harvesting protein B-880 alpha chain from Afifella marina (Rhodobium marinum).